Here is a 312-residue protein sequence, read N- to C-terminus: Olfactory receptor 7D2 (312 aa).

Residues 1–25 are Extracellular-facing; the sequence is MEAGNQTGFLEFILLGLSEDPELQP. N-linked (GlcNAc...) asparagine glycosylation occurs at Asn5. A helical membrane pass occupies residues 26 to 46; sequence FIFGLFLSMYLVTVLGNLLII. At 47 to 54 the chain is on the cytoplasmic side; that stretch reads LAISSDSH. Residues 55-75 form a helical membrane-spanning segment; the sequence is LHTPMYFFLSNLSWVDICFST. Residues 76 to 99 are Extracellular-facing; that stretch reads CIVPKMLVNIQTENKAISYMDCLT. Cys97 and Cys189 are oxidised to a cystine. Residues 100-120 form a helical membrane-spanning segment; that stretch reads QVYFSMFFPILDTLLLTVMAY. The Cytoplasmic portion of the chain corresponds to 121–139; it reads DRFVAVCHPLHYMIIMNPH. A helical membrane pass occupies residues 140–160; it reads LCGLLVFVTWLIGVMTSLLHI. The Extracellular portion of the chain corresponds to 161-197; sequence SLMMHLIFCKDFEIPHFFCELTYILQLACSDTFLNST. Residues 198-217 traverse the membrane as a helical segment; sequence LIYFMTGVLGVFPLLGIIFS. At 218–237 the chain is on the cytoplasmic side; it reads YSRIASSIRKMSSSGGKQKA. The helical transmembrane segment at 238 to 258 threads the bilayer; sequence LSTCGSHLSVVSLFYGTGIGV. Topologically, residues 259–271 are extracellular; the sequence is HFTSAVTHSSQKI. A helical transmembrane segment spans residues 272 to 292; it reads SVASVMYTVVTPMLNPFIYSL. Residues 293–312 lie on the Cytoplasmic side of the membrane; sequence RNKDVKGALGSLLSRAASCL.

It belongs to the G-protein coupled receptor 1 family.

It localises to the cell membrane. In terms of biological role, odorant receptor. The polypeptide is Olfactory receptor 7D2 (OR7D2) (Homo sapiens (Human)).